The sequence spans 850 residues: Envelope glycoprotein gp160 (850 aa).

The N-terminal stretch at 1–28 (METQTSWLSLWRWGLMIFGMLMICSARE) is a signal peptide. The Extracellular segment spans residues 29-678 (NLWVTVYYGV…ISNWLWYIKI (650 aa)). Cys-50 and Cys-70 are disulfide-bonded. Residues Asn-84, Asn-126, Asn-133, Asn-134, Asn-139, Asn-152, Asn-156, Asn-184, Asn-193, Asn-226, Asn-230, Asn-237, Asn-258, Asn-272, Asn-285, Asn-297, Asn-327, Asn-334, and Asn-349 are each glycosylated (N-linked (GlcNAc...) asparagine; by host). Disulfide bonds link Cys-115–Cys-201, Cys-122–Cys-192, Cys-127–Cys-153, Cys-214–Cys-243, and Cys-224–Cys-235. The V1 stretch occupies residues 127-152 (CSDVNSNNSTDSNSSASNNSPEIMKN). A V2 region spans residues 153–192 (CSFNVTTEIRNKRKQEYALFYRQDVVPINSDNKSYILINC). The V3 stretch occupies residues 292–325 (CTRPNNNTRKGIHMGPGQVLYATGEIIGDIRKAY). The cysteines at positions 292 and 326 are disulfide-linked. The segment at 357-367 (PSGGDIEITTH) is CD4-binding loop. Intrachain disulfides connect Cys-371/Cys-436 and Cys-378/Cys-409. The interval 378–409 (CNTSTLFNSSWDENNIKDTNSTNDNTTITIPC) is V4. Asn-379, Asn-385, Asn-397, Asn-402, Asn-433, Asn-439, Asn-453, and Asn-457 each carry an N-linked (GlcNAc...) asparagine; by host glycan. Residues 447–467 (RDGGNRNGSENGTETFRPTGG) are disordered. Polar residues predominate over residues 453-462 (NGSENGTETF). V5 regions lie at residues 453–465 (NGSE…FRPT) and 454–465 (GSENGTETFRPT). Residues 506-526 (AVGIGAVFLGFLGTAGSTMGA) form a fusion peptide region. The immunosuppression stretch occupies residues 568–586 (KQLQARVLAVERYLKDQQL). An intrachain disulfide couples Cys-592 to Cys-598. Residues Asn-605, Asn-610, Asn-619, Asn-631, and Asn-668 are each glycosylated (N-linked (GlcNAc...) asparagine; by host). The stretch at 627–661 (REINNYTGIIYSLIEEAQNQQETNEKDLLALDKWT) forms a coiled coil. The MPER; binding to GalCer stretch occupies residues 656-677 (ALDKWTNLWNWFNISNWLWYIK). A helical transmembrane segment spans residues 679 to 699 (FIMIIGGLIGLRIIFAVLAIV). At 700 to 850 (NRVRQGYSPL…IRQGLERALL (151 aa)) the chain is on the cytoplasmic side. The YXXL motif; contains endocytosis signal motif lies at 706–709 (YSPL). Cys-758 carries the S-palmitoyl cysteine; by host lipid modification. The Di-leucine internalization motif signature appears at 849–850 (LL).

Belongs to the HIV-1 env protein family. In terms of assembly, the mature envelope protein (Env) consists of a homotrimer of non-covalently associated gp120-gp41 heterodimers. The resulting complex protrudes from the virus surface as a spike. There seems to be as few as 10 spikes on the average virion. Interacts with host CD4, CCR5 and CXCR4. Gp120 also interacts with the C-type lectins CD209/DC-SIGN and CLEC4M/DC-SIGNR (collectively referred to as DC-SIGN(R)). Gp120 and gp41 interact with GalCer. Gp120 interacts with host ITGA4/ITGB7 complex; on CD4+ T-cells, this interaction results in rapid activation of integrin ITGAL/LFA-1, which facilitates efficient cell-to-cell spreading of HIV-1. Gp120 interacts with cell-associated heparan sulfate; this interaction increases virus infectivity on permissive cells and may be involved in infection of CD4- cells. The mature envelope protein (Env) consists of a homotrimer of non-covalently associated gp120-gp41 heterodimers. The resulting complex protrudes from the virus surface as a spike. There seems to be as few as 10 spikes on the average virion. Post-translationally, highly glycosylated by host. The high number of glycan on the protein is reffered to as 'glycan shield' because it contributes to hide protein sequence from adaptive immune system. Palmitoylation of the transmembrane protein and of Env polyprotein (prior to its proteolytic cleavage) is essential for their association with host cell membrane lipid rafts. Palmitoylation is therefore required for envelope trafficking to classical lipid rafts, but not for viral replication. In terms of processing, specific enzymatic cleavages in vivo yield mature proteins. Envelope glycoproteins are synthesized as an inactive precursor that is heavily N-glycosylated and processed likely by host cell furin in the Golgi to yield the mature SU and TM proteins. The cleavage site between SU and TM requires the minimal sequence [KR]-X-[KR]-R. About 2 of the 9 disulfide bonds of gp41 are reduced by P4HB/PDI, following binding to CD4 receptor.

It localises to the virion membrane. The protein localises to the host cell membrane. Its subcellular location is the host endosome membrane. Oligomerizes in the host endoplasmic reticulum into predominantly trimers. In a second time, gp160 transits in the host Golgi, where glycosylation is completed. The precursor is then proteolytically cleaved in the trans-Golgi and thereby activated by cellular furin or furin-like proteases to produce gp120 and gp41. Functionally, attaches the virus to the host lymphoid cell by binding to the primary receptor CD4. This interaction induces a structural rearrangement creating a high affinity binding site for a chemokine coreceptor like CXCR4 and/or CCR5. Acts as a ligand for CD209/DC-SIGN and CLEC4M/DC-SIGNR, which are respectively found on dendritic cells (DCs), and on endothelial cells of liver sinusoids and lymph node sinuses. These interactions allow capture of viral particles at mucosal surfaces by these cells and subsequent transmission to permissive cells. HIV subverts the migration properties of dendritic cells to gain access to CD4+ T-cells in lymph nodes. Virus transmission to permissive T-cells occurs either in trans (without DCs infection, through viral capture and transmission), or in cis (following DCs productive infection, through the usual CD4-gp120 interaction), thereby inducing a robust infection. In trans infection, bound virions remain infectious over days and it is proposed that they are not degraded, but protected in non-lysosomal acidic organelles within the DCs close to the cell membrane thus contributing to the viral infectious potential during DCs' migration from the periphery to the lymphoid tissues. On arrival at lymphoid tissues, intact virions recycle back to DCs' cell surface allowing virus transmission to CD4+ T-cells. In terms of biological role, acts as a class I viral fusion protein. Under the current model, the protein has at least 3 conformational states: pre-fusion native state, pre-hairpin intermediate state, and post-fusion hairpin state. During fusion of viral and target intracellular membranes, the coiled coil regions (heptad repeats) assume a trimer-of-hairpins structure, positioning the fusion peptide in close proximity to the C-terminal region of the ectodomain. The formation of this structure appears to drive apposition and subsequent fusion of viral and target cell membranes. Complete fusion occurs in host cell endosomes and is dynamin-dependent, however some lipid transfer might occur at the plasma membrane. The virus undergoes clathrin-dependent internalization long before endosomal fusion, thus minimizing the surface exposure of conserved viral epitopes during fusion and reducing the efficacy of inhibitors targeting these epitopes. Membranes fusion leads to delivery of the nucleocapsid into the cytoplasm. The polypeptide is Envelope glycoprotein gp160 (Human immunodeficiency virus type 1 group M subtype J (isolate SE9173) (HIV-1)).